The sequence spans 376 residues: 23S rRNA (uracil(747)-C(5))-methyltransferase RlmC (376 aa).

Cys-3, Cys-11, Cys-14, and Cys-87 together coordinate [4Fe-4S] cluster. The S-adenosyl-L-methionine site is built by Gln-212, Phe-241, Glu-262, and Asn-307. Catalysis depends on Cys-334, which acts as the Nucleophile.

Belongs to the class I-like SAM-binding methyltransferase superfamily. RNA M5U methyltransferase family. RlmC subfamily.

The enzyme catalyses uridine(747) in 23S rRNA + S-adenosyl-L-methionine = 5-methyluridine(747) in 23S rRNA + S-adenosyl-L-homocysteine + H(+). Catalyzes the formation of 5-methyl-uridine at position 747 (m5U747) in 23S rRNA. The polypeptide is 23S rRNA (uracil(747)-C(5))-methyltransferase RlmC (Yersinia pseudotuberculosis serotype I (strain IP32953)).